The following is a 344-amino-acid chain: Small ribosomal subunit biogenesis GTPase RsgA (344 aa).

One can recognise a CP-type G domain in the interval 100–268 (KNELSRPDYY…LIDSPGIREF (169 aa)). GTP contacts are provided by residues 156-159 (NKID) and 210-218 (GQSGVGKSS). The Zn(2+) site is built by Cys292, Cys297, His299, and Cys305.

This sequence belongs to the TRAFAC class YlqF/YawG GTPase family. RsgA subfamily. In terms of assembly, monomer. Associates with 30S ribosomal subunit, binds 16S rRNA. The cofactor is Zn(2+).

It is found in the cytoplasm. Functionally, one of several proteins that assist in the late maturation steps of the functional core of the 30S ribosomal subunit. Helps release RbfA from mature subunits. May play a role in the assembly of ribosomal proteins into the subunit. Circularly permuted GTPase that catalyzes slow GTP hydrolysis, GTPase activity is stimulated by the 30S ribosomal subunit. The polypeptide is Small ribosomal subunit biogenesis GTPase RsgA (Actinobacillus pleuropneumoniae serotype 5b (strain L20)).